The chain runs to 156 residues: Snaclec A2 (156 aa).

The first 23 residues, 1 to 23, serve as a signal peptide directing secretion; that stretch reads MGRLISVSFGLLVVFLSLSGTGA. Disulfide bonds link Cys27/Cys38, Cys55/Cys154, and Cys129/Cys146. The C-type lectin domain occupies 34–155; it reads HEGHCYKVFN…CGQPYRFTCE (122 aa).

This sequence belongs to the snaclec family. Heterodimer; disulfide-linked. As to expression, expressed by the venom gland.

The protein localises to the secreted. Functionally, interferes with one step of hemostasis (modulation of platelet aggregation, or coagulation cascade, for example). This Macrovipera lebetinus (Levantine viper) protein is Snaclec A2.